A 230-amino-acid polypeptide reads, in one-letter code: Transmembrane 4 L6 family member 20 (230 aa).

Residues 1–11 (MTCCEGWTSCN) are Lumenal-facing. A helical transmembrane segment spans residues 12-32 (GFSLLVLLLLGVTLNAIPLIL). Over 33-44 (NFVDEDQFFENP) the chain is Cytoplasmic. Residues 45-65 (ISCFEWWFPGIIGAGVMAIPA) form a helical membrane-spanning segment. Residues 66 to 83 (TTMSLAARKRACCNNKTG) lie on the Lumenal side of the membrane. The helical transmembrane segment at 84 to 104 (MFLSSLLNAITVIGAAYCLLV) threads the bilayer. The Cytoplasmic portion of the chain corresponds to 105 to 185 (SIQALAEGPL…HFNSIENQHR (81 aa)). A helical transmembrane segment spans residues 186-206 (IIHFSVFLGLLLVGILEILFG). Residues 207 to 230 (LSQIIIGFFGCLCGGVSNGRSQIV) are Lumenal-facing.

It belongs to the L6 tetraspanin family. In terms of processing, glycosylated at Asn-132 in presence of ceramide which inverts the orientation of TM4SF20 in membranes exposing these residues to the endoplasmic reticulum lumen. Post-translationally, cleaved by signal peptidase at Ser-14 but the peptide does not act as a signal peptide. Cleavage is inhibited by ceramide which inverts the orientation of TM4SF20 in membranes exposing the N-terminus to the cytosol and not to the endoplasmic reticulum lumen.

It is found in the membrane. The protein resides in the endoplasmic reticulum membrane. Functionally, polytopic transmembrane protein. Inhibits regulated intramembrane proteolysis (RIP) of CREB3L1, inhibiting its activation and the induction of collagen synthesis. In response to ceramide, which alters TM4SF20 membrane topology, stimulates RIP activation of CREB3L1. Ceramide reverses the direction through which transmembrane helices are translocated into the endoplasmic reticulum membrane during translation of TM4SF20, this mechanism is called 'regulated alternative translocation' (RAT) and regulates the function of the transmembrane protein. In Bos taurus (Bovine), this protein is Transmembrane 4 L6 family member 20 (TM4SF20).